Reading from the N-terminus, the 179-residue chain is Protein TIFY 11a (179 aa).

A Tify domain is found at 62–97 (VDGGGQQFTIFYAGKVVVIDRCTPAMAAELMRFASA). The short motif at 115–140 (PIARKASLKRFLAKRKATPASARSSY) is the Jas element. The short motif at 117-124 (ARKASLKR) is the Nuclear localization signal element.

Belongs to the TIFY/JAZ family. As to quaternary structure, interacts with BHLH148. Interacts with COI1A in a coronatine-dependent manner. Interacts with COI1B in a coronatine-dependent manner. Coronatine is an analog of jasmonoyl isoleucine (JA-Ile). Interacts with RSS3. Forms a ternary complex with RSS3 and BHLH094 in the nucleus. Interacts with BHLH062 and NINJA1. Interacts with MYB30. Post-translationally, ubiquitinated. Targeted for degradation by the SCF(COI1) E3 ubiquitin ligase-proteasome pathway during jasmonate signaling.

The protein localises to the nucleus. Its function is as follows. Repressor of jasmonate (JA) responses. Forms a ternary complex with RSS3 and BHLH94 to negatively regulate JA-responsive genes. Acts as a positive regulator of tolerance to salt stress. Involved in salt tolerance by modulating potassium homeostasis through JA signaling and regulation of the expression of potassium ion transporter genes. Acts as a transcriptional regulator targeted by the SCF(COI1) E3 ubiquitin ligase complexes in the JA signaling pathway, and interacts with BHLH062 that may directly regulate the ion transporter genes. Acts as a positive regulator of tolerance to dehydration stress. Acts as a negative regulator of tolerance to cold stress by interacting with MYB30. The sequence is that of Protein TIFY 11a from Oryza sativa subsp. japonica (Rice).